Here is a 62-residue protein sequence, read N- to C-terminus: Photosystem II reaction center protein Z (62 aa).

Transmembrane regions (helical) follow at residues 8-28 (SVFALIILSFLLVIGVPVVLA) and 41-61 (FSGASLWIGLVFLVGILNSFI).

This sequence belongs to the PsbZ family. PSII is composed of 1 copy each of membrane proteins PsbA, PsbB, PsbC, PsbD, PsbE, PsbF, PsbH, PsbI, PsbJ, PsbK, PsbL, PsbM, PsbT, PsbY, PsbZ, Psb30/Ycf12, at least 3 peripheral proteins of the oxygen-evolving complex and a large number of cofactors. It forms dimeric complexes.

It is found in the plastid. Its subcellular location is the chloroplast thylakoid membrane. In terms of biological role, may control the interaction of photosystem II (PSII) cores with the light-harvesting antenna, regulates electron flow through the 2 photosystem reaction centers. PSII is a light-driven water plastoquinone oxidoreductase, using light energy to abstract electrons from H(2)O, generating a proton gradient subsequently used for ATP formation. This is Photosystem II reaction center protein Z from Staurastrum punctulatum (Green alga).